We begin with the raw amino-acid sequence, 435 residues long: Elongation factor 1-alpha (435 aa).

A tr-type G domain is found at 4–229 (KPHLNLIVIG…DMLEIPPKPV (226 aa)). Residues 13–20 (GHVDHGKS) form a G1 region. 13–20 (GHVDHGKS) contacts GTP. Position 20 (Ser-20) interacts with Mg(2+). Positions 69–73 (GVTIN) are G2. Positions 90–93 (DAPG) are G3. Residues 90 to 94 (DAPGH) and 152 to 155 (TKMD) contribute to the GTP site. A G4 region spans residues 152–155 (TKMD). The G5 stretch occupies residues 193-195 (VSI).

It belongs to the TRAFAC class translation factor GTPase superfamily. Classic translation factor GTPase family. EF-Tu/EF-1A subfamily.

Its subcellular location is the cytoplasm. The enzyme catalyses GTP + H2O = GDP + phosphate + H(+). In terms of biological role, GTP hydrolase that promotes the GTP-dependent binding of aminoacyl-tRNA to the A-site of ribosomes during protein biosynthesis. The sequence is that of Elongation factor 1-alpha from Metallosphaera sedula (strain ATCC 51363 / DSM 5348 / JCM 9185 / NBRC 15509 / TH2).